A 350-amino-acid chain; its full sequence is MEMINKENLSSQAKLWNFIYGFADSLVLKSAVQLDLANIIHNHGSPMTLSELSLHLPSQPVNQDALYRVLRYLVHMKLFTKSSIDGELRYGLAPPAKFLVKGWDKCMLGAILTITDKDFMAPWHYLKEGILNDGSTSTAFEKALGTNIWDYMAEHPEKNQLFNEGMANDTRLIMSALVKECSSMFDGITTIVDVGGGTGTAVRNIAKAFPHIKCTVYDLPHVIADSPGYTEINSIQGDMFKYIPNADAIMMKCILHDWDDKECIEILKRCKDAVPRDGGKVIIIDIILDVKSEHPYTKMRLTLDLDMMLNTGGKERTEEEWKKLIHDAGYKGYKITHISAVQSVIEAYPY.

M166 is an S-adenosyl-L-methionine binding site. D169 is a binding site for substrate. S-adenosyl-L-methionine-binding positions include T170, G195, D218, 238 to 239 (DM), and K252. Substrate is bound by residues 253 to 257 (CILHD) and D306. Residue H256 is the Proton acceptor of the active site.

Belongs to the class I-like SAM-binding methyltransferase superfamily. Cation-independent O-methyltransferase family. COMT subfamily. In terms of assembly, homodimer. Expressed in leaf primordia of rhizomes and root endodermis.

The enzyme catalyses (S)-norcoclaurine + S-adenosyl-L-methionine = (S)-coclaurine + S-adenosyl-L-homocysteine + H(+). It catalyses the reaction norcoclaurine + S-adenosyl-L-methionine = coclaurine + S-adenosyl-L-homocysteine + H(+). Its activity is regulated as follows. Inhibited by sanguinarine. Involved in the biosynthesis of coclaurine, a precursor of benzylisoquinoline alkaloids. Catalyzes the transfer of the S-methyl group of S-adenosyl-L-methionine (AdoMet) to the 6-hydroxyl group of norcoclaurine to form coclaurine. This is (RS)-norcoclaurine 6-O-methyltransferase from Thalictrum flavum subsp. glaucum (Yellow meadow rue).